We begin with the raw amino-acid sequence, 887 residues long: Alanine--tRNA ligase (887 aa).

Residues histidine 575, histidine 579, cysteine 677, and histidine 681 each contribute to the Zn(2+) site.

This sequence belongs to the class-II aminoacyl-tRNA synthetase family. The cofactor is Zn(2+).

The protein resides in the cytoplasm. The enzyme catalyses tRNA(Ala) + L-alanine + ATP = L-alanyl-tRNA(Ala) + AMP + diphosphate. Its function is as follows. Catalyzes the attachment of alanine to tRNA(Ala) in a two-step reaction: alanine is first activated by ATP to form Ala-AMP and then transferred to the acceptor end of tRNA(Ala). Also edits incorrectly charged Ser-tRNA(Ala) and Gly-tRNA(Ala) via its editing domain. The polypeptide is Alanine--tRNA ligase (Geobacillus kaustophilus (strain HTA426)).